The following is a 673-amino-acid chain: Beta-galactosidase GalA (673 aa).

Arg105 is a substrate binding site. Cys109 provides a ligand contact to Zn(2+). Residue Asn143 participates in substrate binding. The active-site Proton donor is Glu144. Zn(2+)-binding residues include Cys149, Cys151, and Cys154. The active-site Nucleophile is the Glu308. Residues Trp316 and 356–359 each bind substrate; that span reads EKFH.

The protein belongs to the glycosyl hydrolase 42 family. Homodimer.

The catalysed reaction is Hydrolysis of terminal non-reducing beta-D-galactose residues in beta-D-galactosides.. Its activity is regulated as follows. Inhibited by hydrolysis end products D-galactose and D-glucose. The hydrolysis of o-nitrophenyl-beta-D-galactopyranoside (ONPG) is slightly activated by monovalent ions, Na(+) and K(+). Concentrations of these ions in the range of 1-100 mM exert the stimulating effects. The presence of 1 mM Mn(2+) together with the presence of 10 mM Na(+) slightly stimulates the activity, while presence of 10 mM Mn(2+) inhibits the activity by about 40%. Catalyzes the hydrolysis of lactose to its constituent monosaccharides glucose and galactose. Possesses a low level of transgalactosylation activity for the production of galacto-oligosaccharides (GOS) from lactose. In Bacillus licheniformis (strain ATCC 14580 / DSM 13 / JCM 2505 / CCUG 7422 / NBRC 12200 / NCIMB 9375 / NCTC 10341 / NRRL NRS-1264 / Gibson 46), this protein is Beta-galactosidase GalA.